The primary structure comprises 303 residues: 1D-myo-inositol 2-acetamido-2-deoxy-alpha-D-glucopyranoside deacetylase 1 (303 aa).

Zn(2+)-binding residues include His15, Asp18, and His157.

This sequence belongs to the MshB deacetylase family. The cofactor is Zn(2+).

The enzyme catalyses 1D-myo-inositol 2-acetamido-2-deoxy-alpha-D-glucopyranoside + H2O = 1D-myo-inositol 2-amino-2-deoxy-alpha-D-glucopyranoside + acetate. In terms of biological role, catalyzes the deacetylation of 1D-myo-inositol 2-acetamido-2-deoxy-alpha-D-glucopyranoside (GlcNAc-Ins) in the mycothiol biosynthesis pathway. This Saccharopolyspora erythraea (strain ATCC 11635 / DSM 40517 / JCM 4748 / NBRC 13426 / NCIMB 8594 / NRRL 2338) protein is 1D-myo-inositol 2-acetamido-2-deoxy-alpha-D-glucopyranoside deacetylase 1.